A 282-amino-acid chain; its full sequence is MSLVTSLTYVLPHRLLSSLARALAYSDRPATKQWLIDTVTRKFGVDLSEAQEPDPRAYPTFNAFFTRALKHGARVPDADPAALLMPADGRISQLGPIENGRIFQAKGQSFTAAELLGDAGAAAPFNNGLFATVYLSPKDYHRVHMPWTGTLRTTVHVPGRLFSVGPDAVRNVPRLFARNERLVCHFDTDFGPMASVMVGALLVSGVETVWSGVEIPRYGDRITRKDYRGKGIVLEKFAEMARFNYGSTVIVLLPPGVATLDGGLGAETSVRLGQALARRQLG.

Active-site charge relay system; for autoendoproteolytic cleavage activity residues include D88, H144, and S247. The active-site Schiff-base intermediate with substrate; via pyruvic acid; for decarboxylase activity is S247. A Pyruvic acid (Ser); by autocatalysis modification is found at S247.

It belongs to the phosphatidylserine decarboxylase family. PSD-B subfamily. Prokaryotic type I sub-subfamily. In terms of assembly, heterodimer of a large membrane-associated beta subunit and a small pyruvoyl-containing alpha subunit. The cofactor is pyruvate. Is synthesized initially as an inactive proenzyme. Formation of the active enzyme involves a self-maturation process in which the active site pyruvoyl group is generated from an internal serine residue via an autocatalytic post-translational modification. Two non-identical subunits are generated from the proenzyme in this reaction, and the pyruvate is formed at the N-terminus of the alpha chain, which is derived from the carboxyl end of the proenzyme. The autoendoproteolytic cleavage occurs by a canonical serine protease mechanism, in which the side chain hydroxyl group of the serine supplies its oxygen atom to form the C-terminus of the beta chain, while the remainder of the serine residue undergoes an oxidative deamination to produce ammonia and the pyruvoyl prosthetic group on the alpha chain. During this reaction, the Ser that is part of the protease active site of the proenzyme becomes the pyruvoyl prosthetic group, which constitutes an essential element of the active site of the mature decarboxylase.

The protein localises to the cell membrane. It catalyses the reaction a 1,2-diacyl-sn-glycero-3-phospho-L-serine + H(+) = a 1,2-diacyl-sn-glycero-3-phosphoethanolamine + CO2. Its pathway is phospholipid metabolism; phosphatidylethanolamine biosynthesis; phosphatidylethanolamine from CDP-diacylglycerol: step 2/2. Functionally, catalyzes the formation of phosphatidylethanolamine (PtdEtn) from phosphatidylserine (PtdSer). This chain is Phosphatidylserine decarboxylase proenzyme, found in Xanthomonas oryzae pv. oryzae (strain MAFF 311018).